Reading from the N-terminus, the 460-residue chain is MTLNGNIMKYCLEKGEILISFLLIALESMFRICTVILPSPLRNWFYEQSKKVYSYFLPELLVDDNANKLTDARDTIDLCALHGYDLEEHFVRTTDGYLLGLHRVYKKKKGKIEELNYLPPVLFIHGLMMNSESWVCNLKKEDAIPFALVEQGYDVWLGNLRGNKYSIKNIKFSSQNPKFWDFSLDSIAIFDIPSIVKYILSVNSFDSISLVGFSQGAILAFAALSIDTELRNSVRAFIALAPAIAPKKYSGRTVKSIIHANSQLLYLMFGRNSMLGSAVFWQAVLYPPVFAKIVDLFLRFFLSWTGKNISETQKIVAYSHLYSFTSVKCFVHWAQITRRKVLQMYDDSPGFKPSYYTNLNRIARYPIENIRLPITLVYGSNDNMVDIETLKTQLPPLSQCIQIPNYEHLDIIMGDTKKDIVIQQVVEQLNHVIAGDYFESIKEEFGLDTELVDGVMNHTI.

Residues 1 to 16 (MTLNGNIMKYCLEKGE) are Cytoplasmic-facing. The helical; Signal-anchor for type II membrane protein transmembrane segment at 17-37 (ILISFLLIALESMFRICTVIL) threads the bilayer. Residues 38 to 460 (PSPLRNWFYE…LVDGVMNHTI (423 aa)) lie on the Lumenal side of the membrane. Serine 214 serves as the catalytic Nucleophile. Asparagine 308 carries an N-linked (GlcNAc...) asparagine glycan. Catalysis depends on charge relay system residues aspartate 382 and histidine 408. An N-linked (GlcNAc...) asparagine glycan is attached at asparagine 457.

This sequence belongs to the AB hydrolase superfamily. Lipase family.

The protein localises to the golgi apparatus. Its subcellular location is the membrane. Its function is as follows. Probable lipase. The polypeptide is Probable lipase C14C8.15 (Schizosaccharomyces pombe (strain 972 / ATCC 24843) (Fission yeast)).